An 85-amino-acid polypeptide reads, in one-letter code: Cell division topological specificity factor (85 aa).

Belongs to the MinE family.

Its function is as follows. Prevents the cell division inhibition by proteins MinC and MinD at internal division sites while permitting inhibition at polar sites. This ensures cell division at the proper site by restricting the formation of a division septum at the midpoint of the long axis of the cell. This Cellvibrio japonicus (strain Ueda107) (Pseudomonas fluorescens subsp. cellulosa) protein is Cell division topological specificity factor.